The following is a 554-amino-acid chain: Cytochrome c oxidase subunit 1-alpha (554 aa).

The helical transmembrane segment at 26-56 (KDIGVLYLFTAGLAGLISVTLTVYMRMELQH) threads the bilayer. Cys63 and Cys77 form a disulfide bridge. 6 helical membrane-spanning segments follow: residues 81–118 (AHLW…LHIG), 127–148 (LNNL…SLLS), 175–203 (AMDL…TFLN), 215–248 (PLFA…DRNF), 260–295 (DPVL…STFA), and 301–319 (GYLP…GFIV). His91 serves as a coordination point for Fe(II)-heme a. Residues His273 and Tyr277 each contribute to the Cu cation site. The segment at residues 273-277 (HPEVY) is a cross-link (1'-histidyl-3'-tyrosine (His-Tyr)). The Cu cation site is built by His322 and His323. A run of 5 helical transmembrane segments spans residues 331 to 359 (LTQQ…IATM), 367 to 390 (KTPM…VIAQ), 399 to 425 (DTYY…GTYY), 436 to 463 (PEWA…FLGR), and 478 to 508 (SYWN…TLFA). His406 is a heme a3 binding site. His408 is a Fe(II)-heme a binding site.

Belongs to the heme-copper respiratory oxidase family. Cu(2+) is required as a cofactor. Heme serves as cofactor.

It is found in the cell inner membrane. It catalyses the reaction 4 Fe(II)-[cytochrome c] + O2 + 8 H(+)(in) = 4 Fe(III)-[cytochrome c] + 2 H2O + 4 H(+)(out). The protein operates within energy metabolism; oxidative phosphorylation. In terms of biological role, subunit I and II form the functional core of the enzyme complex. Electrons originating in cytochrome c are transferred via heme a and Cu(A) to the binuclear center formed by heme a3 and Cu(B). This cytochrome c oxidase shows proton pump activity across the membrane in addition to the electron transfer. This is Cytochrome c oxidase subunit 1-alpha (ctaDI) from Paracoccus denitrificans.